The primary structure comprises 245 residues: Ribosomal RNA small subunit methyltransferase G (245 aa).

S-adenosyl-L-methionine is bound by residues Gly80, Phe85, 103 to 105 (DAT), 131 to 132 (AE), and Arg150.

Belongs to the methyltransferase superfamily. RNA methyltransferase RsmG family.

It localises to the cytoplasm. Its function is as follows. Specifically methylates the N7 position of a guanine in 16S rRNA. This Deinococcus geothermalis (strain DSM 11300 / CIP 105573 / AG-3a) protein is Ribosomal RNA small subunit methyltransferase G.